The chain runs to 206 residues: Protease (206 aa).

Active-site residues include His-54, Asp-71, and Cys-122.

The protein belongs to the peptidase C5 family. In terms of assembly, interacts with protease cofactor pVI-C; this interaction is necessary for protease activation.

It is found in the virion. Its subcellular location is the host nucleus. The enzyme catalyses Cleaves proteins of the adenovirus and its host cell at two consensus sites: -Yaa-Xaa-Gly-Gly-|-Xaa- and -Yaa-Xaa-Gly-Xaa-|-Gly- (in which Yaa is Met, Ile or Leu, and Xaa is any amino acid).. Its activity is regulated as follows. Requires DNA and protease cofactor for maximal activation. Inside nascent virions, becomes partially activated by binding to the viral DNA, allowing it to cleave the cofactor that binds to the protease and fully activates it. Actin, like the viral protease cofactor, seems to act as a cofactor in the cleavage of cytokeratin 18 and of actin itself. Functionally, cleaves viral precursor proteins (pTP, pIIIa, pVI, pVII, pVIII, and pX) inside newly assembled particles giving rise to mature virions. Protease complexed to its cofactor slides along the viral DNA to specifically locate and cleave the viral precursors. Mature virions have a weakened organization compared to the unmature virions, thereby facilitating subsequent uncoating. Without maturation, the particle lacks infectivity and is unable to uncoat. Late in adenovirus infection, in the cytoplasm, may participate in the cytoskeleton destruction. Cleaves host cell cytoskeletal keratins K7 and K18. The sequence is that of Protease from Homo sapiens (Human).